A 43-amino-acid chain; its full sequence is SATVELYSNLAAKGLAVEFTSTSLKAALLNILSVDGVPATTAK.

It localises to the secreted. Its subcellular location is the cell wall. The protein localises to the S-layer. Functionally, the S-layer is a paracrystalline mono-layered assembly of proteins which coat the surface of bacteria. The chain is S-layer protein 1 from Bacillus thuringiensis subsp. konkukian.